Here is a 434-residue protein sequence, read N- to C-terminus: UDP-N-acetylglucosamine 1-carboxyvinyltransferase (434 aa).

Phosphoenolpyruvate is bound at residue 22-23; that stretch reads KN. Arginine 93 provides a ligand contact to UDP-N-acetyl-alpha-D-glucosamine. The active-site Proton donor is cysteine 117. Cysteine 117 is subject to 2-(S-cysteinyl)pyruvic acid O-phosphothioketal. Residues aspartate 307 and valine 329 each contribute to the UDP-N-acetyl-alpha-D-glucosamine site.

Belongs to the EPSP synthase family. MurA subfamily.

It localises to the cytoplasm. It catalyses the reaction phosphoenolpyruvate + UDP-N-acetyl-alpha-D-glucosamine = UDP-N-acetyl-3-O-(1-carboxyvinyl)-alpha-D-glucosamine + phosphate. The protein operates within cell wall biogenesis; peptidoglycan biosynthesis. Cell wall formation. Adds enolpyruvyl to UDP-N-acetylglucosamine. The sequence is that of UDP-N-acetylglucosamine 1-carboxyvinyltransferase from Coxiella burnetii (strain CbuG_Q212) (Coxiella burnetii (strain Q212)).